Here is an 875-residue protein sequence, read N- to C-terminus: MQRDLLSTINSMSARIKALERYEHALREIHKVIVVMRPGFNLQVLDPDAMPALIVQFFSDLTGRNTTHNINYRYDYNVGGALPFQPPPPQPFYPYGQYWPQQPPQPPPDQPQQPQPPQQPPQQPPQQQPQPPQPPQQPPQPPQPPPQQLALVQQIELSVDEVRELQALQLNMQQQTITWSHFATFIGTMTRILQTRVVNSAFLIGAIEALQNVDRLTNYDFNEFLRCVANETALRFEIAPDLCRVVAAFIQFFQKTHMVVYRTTFTYVNSQSLTASAEALHLVIVKLFWFFSKIYVYVMRAEFVYTNSTALAATIEELYARVEAIPVAAQNSAELAQLHAEMRALRTVTADLQGMRDSAEQRLQAANARYEAADAKSRELDQQLVRLRPLAAQSETLRFEKSELATENERLRGEIAALQNASANGLAGAETVSRLTASLADAQAQLTARTAEQNLVMAQKDNEYATKTQQAAADYVAKLNAEREAYERNLRAKEDGLGATIQRLQEENAELRSTLDNRNREFAQGSDQFAAVNMQLNEARRAVAEKNGQLVAANEIRARLEQQLADATQQLAKTEQLLVQQQKSGPMETDKQEINKEESDYLLTALDIMYKNARILNPNLGGRDLSQNLNDLQFGLASEQRLALEQWFSTLRETTAPNDVLNFAALTNVNDLVNDLKSQIITKIPANMLRTFDNRIVKPEEAGAVDNVTLISAVSRLVDEYSRLGLENAQLESTNKTLYDDNVTLSETCTQQLKSLRDDLNKNMSNVDAINDLVKTTPELDKQAIQDVRTELSKTQSRLKSLKEAKLVELKQMASTSALEEMSKLNNNIREINSLLSKHAAITEDIFKWKTTMLEVYESLARTMAEENVLPPPTL.

The tract at residues 83 to 149 (PFQPPPPQPF…QPPQPPPQQL (67 aa)) is disordered. Residues 101-147 (QQPPQPPPDQPQQPQPPQQPPQQPPQQQPQPPQPPQQPPQPPQPPPQ) are compositionally biased toward pro residues.

This is an uncharacterized protein from Orgyia pseudotsugata multicapsid polyhedrosis virus (OpMNPV).